A 366-amino-acid polypeptide reads, in one-letter code: Putative [LysW]-aminoadipate semialdehyde/glutamate semialdehyde transaminase (366 aa).

Pyridoxal 5'-phosphate-binding positions include 90 to 91 (GT) and phenylalanine 117. Substrate is bound at residue arginine 120. 202 to 205 (DEVQ) contacts pyridoxal 5'-phosphate. Lysine 230 is modified (N6-(pyridoxal phosphate)lysine). Serine 254 provides a ligand contact to substrate. Residue threonine 255 participates in pyridoxal 5'-phosphate binding.

This sequence belongs to the class-III pyridoxal-phosphate-dependent aminotransferase family. LysJ subfamily. Homodimer. Pyridoxal 5'-phosphate is required as a cofactor.

Its subcellular location is the cytoplasm. The enzyme catalyses [amino-group carrier protein]-C-terminal-gamma-(L-lysyl)-L-glutamate + 2-oxoglutarate = [amino-group carrier protein]-C-terminal-N-(1-carboxy-5-oxopentan-1-yl)-L-glutamine + L-glutamate. The catalysed reaction is [amino-group carrier protein]-C-terminal-gamma-(L-ornithyl)-L-glutamate + 2-oxoglutarate = [amino-group carrier protein]-C-terminal-gamma-(L-glutamyl-5-semialdehyde)-L-glutamate + L-glutamate. It participates in amino-acid biosynthesis; L-lysine biosynthesis via AAA pathway; L-lysine from L-alpha-aminoadipate (Thermus route): step 4/5. Its pathway is amino-acid biosynthesis; L-arginine biosynthesis. In terms of biological role, involved in both the arginine and lysine biosynthetic pathways. This chain is Putative [LysW]-aminoadipate semialdehyde/glutamate semialdehyde transaminase, found in Pyrococcus furiosus (strain ATCC 43587 / DSM 3638 / JCM 8422 / Vc1).